Consider the following 197-residue polypeptide: Holliday junction resolvase RecU (197 aa).

The interval 1–21 (MVNYPSGVRAGGYPQKKKNQN) is disordered. Thr82, Asp84, Asp97, and Gln116 together coordinate Mg(2+).

The protein belongs to the RecU family. Mg(2+) is required as a cofactor.

It localises to the cytoplasm. The catalysed reaction is Endonucleolytic cleavage at a junction such as a reciprocal single-stranded crossover between two homologous DNA duplexes (Holliday junction).. Endonuclease that resolves Holliday junction intermediates in genetic recombination. Cleaves mobile four-strand junctions by introducing symmetrical nicks in paired strands. Promotes annealing of linear ssDNA with homologous dsDNA. Required for DNA repair, homologous recombination and chromosome segregation. This is Holliday junction resolvase RecU from Oenococcus oeni (strain ATCC BAA-331 / PSU-1).